Consider the following 299-residue polypeptide: MIKTKTTSLLCFLLTAVILMNPSSSSPTDNYIYAVCSPAKFSPSSGYETNLNSLLSSFVTSTAQTRYANFTVPTGKPEPTVTVYGIYQCRGDLDPTACSTCVSSAVAQVGALCSNSYSGFLQMENCLIRYDNKSFLGVQDKTLILNKCGQPMEFNDQDALTKASDVIGSLGTGDGSYRTGGNGNVQGVAQCSGDLSTSQCQDCLSDAIGRLKSDCGMAQGGYVYLSKCYARFSVGGSHARQTPGPNFGHEGEKGNKDDNGVGKTLAIIIGIVTLIILLVVFLAFVGKCCRKLQDEKWCK.

Positions 1 to 25 (MIKTKTTSLLCFLLTAVILMNPSSS) are cleaved as a signal peptide. Residues 26–264 (SPTDNYIYAV…NKDDNGVGKT (239 aa)) are Extracellular-facing. Gnk2-homologous domains are found at residues 29-135 (DNYI…NKSF) and 137-237 (GVQD…VGGS). Disulfide bonds link cysteine 36-cysteine 113, cysteine 89-cysteine 98, cysteine 101-cysteine 126, cysteine 148-cysteine 215, cysteine 191-cysteine 200, and cysteine 203-cysteine 228. Residues 265–285 (LAIIIGIVTLIILLVVFLAFV) form a helical membrane-spanning segment. Positions 265 to 285 (LAIIIGIVTLIILLVVFLAFV) are necessary and sufficient for plasmodesmal targeting. Over 286–299 (GKCCRKLQDEKWCK) the chain is Cytoplasmic.

This sequence belongs to the cysteine-rich repeat secretory protein family. Plasmodesmata-located proteins (PDLD) subfamily. Monomer. Interacts with PDLP1. As to quaternary structure, (Microbial infection) Interacts with Grapevine fanleaf virus (GFLV) 2B-MP. In terms of tissue distribution, highly expressed in inflorescence nodes and rosette senescent leaves. Mostly expressed in cell wall junctions between leaf epidermal and mesophyl cells, and to a lesser extent at the cross walls between epidermal or cortex cells within the hypocotyl (at protein level). Low vascular expression in seedling and mature leaf, but high expression in senescing leaves (at protein level).

The protein resides in the cell membrane. The protein localises to the cell junction. It localises to the plasmodesma. Modulates cell-to-cell trafficking. Has a positive role in innate immunity. Required for systemic acquired resistance (SAR) which is mediated by the signaling molecules azelaic acid (AzA), glycerol-3-phosphate (G3P), and salicylic acid (SA). Negative regulator of plasmodesmata permeability triggered by SA during immune responses, through regulation of callose deposition. Delays the trafficking of Tobacco Mosaic Virus (TMV) movement protein (MP). Required for symplastic signal transport. The chain is Plasmodesmata-located protein 5 from Arabidopsis thaliana (Mouse-ear cress).